The primary structure comprises 364 residues: MQESGLKPILWKNKELILLDQRVLPGTTSYITAKTLEDCIFAIREMVVRGAPAIAITGAFGITLYWNSLVSKPSFSELKLKLSELLESRPTAVNLRLAIEEFSSRFPESNYSSFSLEEIQKGAEELALFMLSEDLENNLTLSKYALSLFPKQPSSLNIITHCNTGALATAGHGTALGVIRSLRDAGHSLTVFADETRPYLQGARLTAWELQEEKIQSFLITDNMAGWVMSSRKIDAVIVGADRIASNGDTANKIGTYPLAIVAKHHGVPFYVAATAKSMDFRIPNGSYIPIEMRKEEEITSFGFLKDSDGKPLLKEGVIAPKGMKALNPSFDVTPASLITGIITEKGIVSPVTEENLKKIFQLI.

Substrate contacts are provided by residues 49 to 51 (RGA), arginine 89, and glutamine 201. The Proton donor role is filled by aspartate 242. 252–253 (NK) contributes to the substrate binding site.

Belongs to the eIF-2B alpha/beta/delta subunits family. MtnA subfamily.

It carries out the reaction 5-(methylsulfanyl)-alpha-D-ribose 1-phosphate = 5-(methylsulfanyl)-D-ribulose 1-phosphate. It participates in amino-acid biosynthesis; L-methionine biosynthesis via salvage pathway; L-methionine from S-methyl-5-thio-alpha-D-ribose 1-phosphate: step 1/6. Catalyzes the interconversion of methylthioribose-1-phosphate (MTR-1-P) into methylthioribulose-1-phosphate (MTRu-1-P). The sequence is that of Methylthioribose-1-phosphate isomerase from Leptospira interrogans serogroup Icterohaemorrhagiae serovar Lai (strain 56601).